The sequence spans 874 residues: Alanine--tRNA ligase (874 aa).

Zn(2+)-binding residues include H565, H569, C666, and H670.

It belongs to the class-II aminoacyl-tRNA synthetase family. Zn(2+) is required as a cofactor.

The protein localises to the cytoplasm. The enzyme catalyses tRNA(Ala) + L-alanine + ATP = L-alanyl-tRNA(Ala) + AMP + diphosphate. Functionally, catalyzes the attachment of alanine to tRNA(Ala) in a two-step reaction: alanine is first activated by ATP to form Ala-AMP and then transferred to the acceptor end of tRNA(Ala). Also edits incorrectly charged Ser-tRNA(Ala) and Gly-tRNA(Ala) via its editing domain. The polypeptide is Alanine--tRNA ligase (Polynucleobacter asymbioticus (strain DSM 18221 / CIP 109841 / QLW-P1DMWA-1) (Polynucleobacter necessarius subsp. asymbioticus)).